Consider the following 114-residue polypeptide: UPF0102 protein HPG27_782 (114 aa).

It belongs to the UPF0102 family.

The chain is UPF0102 protein HPG27_782 from Helicobacter pylori (strain G27).